The following is a 189-amino-acid chain: Transcription factor E (189 aa).

One can recognise an HTH TFE/IIEalpha-type domain in the interval 9-101 (AVKSLEIYVR…FWRIDSDTIN (93 aa)).

The protein belongs to the TFE family. Monomer. Interaction with RNA polymerase subunits RpoF and RpoE is necessary for Tfe stimulatory transcription activity. Able to interact with Tbp and RNA polymerase in the absence of DNA promoter. Interacts both with the preinitiation and elongation complexes.

Transcription factor that plays a role in the activation of archaeal genes transcribed by RNA polymerase. Facilitates transcription initiation by enhancing TATA-box recognition by TATA-box-binding protein (Tbp), and transcription factor B (Tfb) and RNA polymerase recruitment. Not absolutely required for transcription in vitro, but particularly important in cases where Tbp or Tfb function is not optimal. It dynamically alters the nucleic acid-binding properties of RNA polymerases by stabilizing the initiation complex and destabilizing elongation complexes. Seems to translocate with the RNA polymerase following initiation and acts by binding to the non template strand of the transcription bubble in elongation complexes. In Aeropyrum pernix (strain ATCC 700893 / DSM 11879 / JCM 9820 / NBRC 100138 / K1), this protein is Transcription factor E.